Here is a 479-residue protein sequence, read N- to C-terminus: Integrator complex subunit 12 (479 aa).

The interval 57-140 (SKVSLPKMTK…SPIAFQTKDI (84 aa)) is disordered. A compositionally biased stretch (low complexity) spans 70–90 (KSSSSSSASSSITTTSSSKSS). The span at 91–128 (TSEKSKKESEKRTLEKIRVDPGEGVEPPKKPRLEKQDS) shows a compositional bias: basic and acidic residues. The PHD-type zinc finger occupies 161–217 (GLACVVCRQMTVTSGNQLVECQECHNLYHQECHKPQVTDKDVNDPRLVWYCARCTRQ). Disordered stretches follow at residues 221–241 (MAQKTQKPPQKPAPALATTVP), 274–293 (TAASGNSSSSSSSSSSLPPG), and 305–479 (SNVG…KLKK). 2 stretches are compositionally biased toward low complexity: residues 223-239 (QKTQKPPQKPAPALATT) and 280-289 (SSSSSSSSSS). The segment covering 305 to 328 (SNVGPSSTKLSTSQSGNSKTSPAA) has biased composition (polar residues). Over residues 354–364 (SSAGSGNGNNG) the composition is skewed to gly residues. The segment covering 399–411 (GSLSPGAAPSSSL) has biased composition (low complexity). A compositionally biased stretch (gly residues) spans 412 to 428 (GGNGGSGGNGAGNGGNS). Residues 429–451 (AGSSSSSGNNNNNGAKASADGKA) are compositionally biased toward low complexity. The span at 466 to 479 (QMVKKKAAQKKLKK) shows a compositional bias: basic residues.

The protein belongs to the Integrator subunit 12 family. Component of the Integrator complex, composed of core subunits INTS1, INTS2, INTS3, INTS4, INTS5, INTS6, INTS7, INTS8, INTS9/RC74, INTS10, INTS11/CPSF3L, INTS12, INTS13, INTS14 and INTS15. The core complex associates with protein phosphatase 2A subunits PPP2CA and PPP2R1A, to form the Integrator-PP2A (INTAC) complex.

Its subcellular location is the nucleus. Functionally, component of the integrator complex, a multiprotein complex that terminates RNA polymerase II (Pol II) transcription in the promoter-proximal region of genes. The integrator complex provides a quality checkpoint during transcription elongation by driving premature transcription termination of transcripts that are unfavorably configured for transcriptional elongation: the complex terminates transcription by (1) catalyzing dephosphorylation of the C-terminal domain (CTD) of Pol II subunit POLR2A/RPB1 and SUPT5H/SPT5, (2) degrading the exiting nascent RNA transcript via endonuclease activity and (3) promoting the release of Pol II from bound DNA. The integrator complex is also involved in terminating the synthesis of non-coding Pol II transcripts, such as enhancer RNAs (eRNAs), small nuclear RNAs (snRNAs), telomerase RNAs and long non-coding RNAs (lncRNAs). The protein is Integrator complex subunit 12 (ints12) of Danio rerio (Zebrafish).